The sequence spans 210 residues: Uracil phosphoribosyltransferase (210 aa).

5-phospho-alpha-D-ribose 1-diphosphate contacts are provided by residues Arg-80, Arg-105, and 132-140; that span reads DPMLATGGS. Residues Ile-195 and 200 to 202 contribute to the uracil site; that span reads GDA. Asp-201 lines the 5-phospho-alpha-D-ribose 1-diphosphate pocket.

Belongs to the UPRTase family. Requires Mg(2+) as cofactor.

It carries out the reaction UMP + diphosphate = 5-phospho-alpha-D-ribose 1-diphosphate + uracil. It participates in pyrimidine metabolism; UMP biosynthesis via salvage pathway; UMP from uracil: step 1/1. Allosterically activated by GTP. Catalyzes the conversion of uracil and 5-phospho-alpha-D-ribose 1-diphosphate (PRPP) to UMP and diphosphate. The sequence is that of Uracil phosphoribosyltransferase from Thermoanaerobacter pseudethanolicus (strain ATCC 33223 / 39E) (Clostridium thermohydrosulfuricum).